Consider the following 540-residue polypeptide: T-complex protein 1 subunit delta (540 aa).

The span at 1-12 (MPPAVPAAAATA) shows a compositional bias: low complexity. A disordered region spans residues 1–32 (MPPAVPAAAATARQSASGRERNFKDKDKPESV). Residues 18–31 (GRERNFKDKDKPES) show a composition bias toward basic and acidic residues.

The protein belongs to the TCP-1 chaperonin family. In terms of assembly, heterooligomeric complex of about 850 to 900 kDa that forms two stacked rings, 12 to 16 nm in diameter.

The protein resides in the cytoplasm. In terms of biological role, molecular chaperone; assists the folding of proteins upon ATP hydrolysis. Known to play a role, in vitro, in the folding of actin and tubulin. This is T-complex protein 1 subunit delta (cct-4) from Caenorhabditis elegans.